A 258-amino-acid chain; its full sequence is tRNA pseudouridine synthase A (258 aa).

Catalysis depends on D55, which acts as the Nucleophile. Y113 is a binding site for substrate.

Belongs to the tRNA pseudouridine synthase TruA family. As to quaternary structure, homodimer.

The catalysed reaction is uridine(38/39/40) in tRNA = pseudouridine(38/39/40) in tRNA. Formation of pseudouridine at positions 38, 39 and 40 in the anticodon stem and loop of transfer RNAs. This is tRNA pseudouridine synthase A from Limosilactobacillus fermentum (strain NBRC 3956 / LMG 18251) (Lactobacillus fermentum).